The primary structure comprises 428 residues: Transcription factor bHLH91 (428 aa).

In terms of domain architecture, bHLH spans 210–259 (KRKNKPFTTERERRCHLNERYEALKLLIPSPSKGDRASILQDGIDYINEL). The segment at 278 to 320 (RHKNNEVDDNNNNKNLDDHGNEDDDDDDENMEKKPESDVIDQC) is disordered. The segment covering 297–307 (GNEDDDDDDEN) has biased composition (acidic residues).

In terms of assembly, homodimer. As to expression, flowers.

Its subcellular location is the nucleus. This is Transcription factor bHLH91 (BHLH91) from Arabidopsis thaliana (Mouse-ear cress).